The sequence spans 353 residues: MTKITNDLFLKAARKEQVDRIPVWYMRQAGRSQPEYRKLKEKYSLFEITHQPEICAYVTKLPVDQYGVDAAILYKDIMTPLPGMGVDVEIKSGIGPVIHNPIRSFQDVEKLTMFKPEIEVPYVLDTIKLLADDMLDVPLIGFAGAPFTLASYMIEGGPSKNYHQTKSFMYREPEVWAILMEKLGRMTANYLIAQINAGTSAVQLFDSWVGALSRADYAEYIRPVIEMIVREVKAVHPTTPIIMQAVGASHLLAEWETMPLDVVGVDWRETITSARKKVPTKAIQGNLDPSTLLAPEKCLKEANRILQEGVLEPGYIFNLGHGVFPEVPPEMLKKLTNYIHERSEILLKKDDIK.

Residues 27–31 (RQAGR), F46, D76, Y152, S207, and H321 contribute to the substrate site.

The protein belongs to the uroporphyrinogen decarboxylase family. As to quaternary structure, homodimer.

The protein resides in the cytoplasm. It carries out the reaction uroporphyrinogen III + 4 H(+) = coproporphyrinogen III + 4 CO2. It functions in the pathway porphyrin-containing compound metabolism; protoporphyrin-IX biosynthesis; coproporphyrinogen-III from 5-aminolevulinate: step 4/4. Functionally, catalyzes the decarboxylation of four acetate groups of uroporphyrinogen-III to yield coproporphyrinogen-III. This is Uroporphyrinogen decarboxylase from Listeria monocytogenes serotype 4b (strain CLIP80459).